The primary structure comprises 31 residues: Monocyclic monoterpene ketone monooxygenase (31 aa).

20-25 (GAGFXG) serves as a coordination point for FAD.

Monomer. FAD is required as a cofactor.

The enzyme catalyses 1-hydroxylimonen-2-one + NADPH + O2 = 3-isopropenyl-6-oxoheptanoate + NADP(+) + H2O. It catalyses the reaction (1R,4S)-1-hydroxylimonen-2-one + NADPH + O2 + H(+) = (4S,7S)-7-hydroxy-4-isopropenyl-7-methyloxepan-2-one + NADP(+) + H2O. It carries out the reaction (1S,4R)-1-hydroxylimonen-2-one + NADPH + O2 + H(+) = (4R,7R)-7-hydroxy-4-isopropenyl-7-methyloxepan-2-one + NADP(+) + H2O. The catalysed reaction is (1R,4R)-dihydrocarvone + NADPH + O2 + H(+) = (4R,7R)-4-isopropenyl-7-methyloxepan-2-one + NADP(+) + H2O. The enzyme catalyses (1S,4R)-menthone + NADPH + O2 + H(+) = (4S,7R)-7-isopropyl-4-methyloxepan-2-one + NADP(+) + H2O. It catalyses the reaction (1R,4S)-menthone + NADPH + O2 + H(+) = (4R,7S)-7-isopropyl-4-methyloxepan-2-one + NADP(+) + H2O. It carries out the reaction (1S,4R)-isodihydrocarvone + NADPH + O2 + H(+) = (3S,6R)-6-isopropenyl-3-methyloxepan-2-one + NADP(+) + H2O. It functions in the pathway terpene metabolism; monoterpene degradation. Functionally, catalyzes the NADPH- and oxygen-dependent oxidation of the monocyclic monoterpene ketones 1-hydroxy-2-oxolimonene, dihydrocarvone and menthone. Is able to convert all enantiomers of these natural substrates with almost equal efficiency. Is thus involved in the conversion of the monocyclic monoterpene ketone intermediates formed in the degradation pathways of all stereoisomers of three different monocyclic monoterpenes, i.e. limonene, (dihydro)carveol and menthol, which likely make R.erythropolis able to grow on these compounds as the sole source of carbon and energy. The protein is Monocyclic monoterpene ketone monooxygenase of Rhodococcus erythropolis (Arthrobacter picolinophilus).